Here is a 313-residue protein sequence, read N- to C-terminus: 4-diphosphocytidyl-2-C-methyl-D-erythritol kinase (313 aa).

Lysine 27 is a catalytic residue. 110-120 (PIGGGVGGGSS) contacts ATP. Residue aspartate 152 is part of the active site.

Belongs to the GHMP kinase family. IspE subfamily.

It carries out the reaction 4-CDP-2-C-methyl-D-erythritol + ATP = 4-CDP-2-C-methyl-D-erythritol 2-phosphate + ADP + H(+). Its pathway is isoprenoid biosynthesis; isopentenyl diphosphate biosynthesis via DXP pathway; isopentenyl diphosphate from 1-deoxy-D-xylulose 5-phosphate: step 3/6. Its function is as follows. Catalyzes the phosphorylation of the position 2 hydroxy group of 4-diphosphocytidyl-2C-methyl-D-erythritol. The chain is 4-diphosphocytidyl-2-C-methyl-D-erythritol kinase from Histophilus somni (strain 129Pt) (Haemophilus somnus).